The following is a 334-amino-acid chain: MEDSTIKEEIWIEKYRPVRLDQVAGQEETIERLKSYVATKNLPHLLFSGPPGVGKTASAVSIAREIFGEDLWRENFTELNASDERGIDVVRTKIKNFAKTAPMGGAEFKIIFLDEADALTSDAQSALRRTMERFSNNCRFILSCNYSSRIIEPIQSRCAVFRFRRLSDEAIRKRLEYIAKDQVLSITEDGYEALVYVSQGDMRKAVNSLQAAAFVEPNKSISRGTIYRTTATANPEDIRNLIETALRGNFRVARKELNRLLYEEGLSGEDIVGQIYRAISEMDNRMILDLGLSEKRIVELVDIIGEIDFRLTEGATEKIQLEALLAHFALSNPD.

ATP is bound at residue 49 to 56 (GPPGVGKT).

This sequence belongs to the activator 1 small subunits family. RfcS subfamily. As to quaternary structure, heteromultimer composed of small subunits (RfcS) and large subunits (RfcL).

In terms of biological role, part of the RFC clamp loader complex which loads the PCNA sliding clamp onto DNA. The sequence is that of Replication factor C small subunit from Methanosarcina barkeri (strain Fusaro / DSM 804).